The chain runs to 239 residues: Mediator of RNA polymerase II transcription subunit 7 (239 aa).

Disordered stretches follow at residues Met-1–Pro-21 and Leu-43–Val-66. The span at Asn-46–Val-66 shows a compositional bias: basic and acidic residues.

This sequence belongs to the Mediator complex subunit 7 family. In terms of assembly, component of the Mediator complex.

Its subcellular location is the nucleus. Functionally, component of the Mediator complex, a coactivator involved in the regulated transcription of nearly all RNA polymerase II-dependent genes. Mediator functions as a bridge to convey information from gene-specific regulatory proteins to the basal RNA polymerase II transcription machinery. Mediator is recruited to promoters by direct interactions with regulatory proteins and serves as a scaffold for the assembly of a functional preinitiation complex with RNA polymerase II and the general transcription factors. This is Mediator of RNA polymerase II transcription subunit 7 (MED7) from Cryptococcus neoformans var. neoformans serotype D (strain B-3501A) (Filobasidiella neoformans).